A 188-amino-acid chain; its full sequence is Selenoprotein S B (188 aa).

Residues 29-49 traverse the membrane as a helical segment; that stretch reads EALSNYGWYILLGCIVIYFLI. The segment covering 116-125 has biased composition (basic and acidic residues); sequence TWDRMQEGKS. The segment at 116 to 188 is disordered; sequence TWDRMQEGKS…RGPSSGGSUG (73 aa). Over residues 136–147 the composition is skewed to low complexity; sequence ASPRTSTSSSAP. A non-standard amino acid (selenocysteine) is located at residue Sec187.

It belongs to the selenoprotein S family.

The protein resides in the endoplasmic reticulum membrane. It localises to the cytoplasm. Its function is as follows. Involved in the degradation process of misfolded endoplasmic reticulum (ER) luminal proteins. Participates in the transfer of misfolded proteins from the ER to the cytosol, where they are destroyed by the proteasome in a ubiquitin-dependent manner. The chain is Selenoprotein S B (vimp-b) from Xenopus laevis (African clawed frog).